The sequence spans 430 residues: 2-deoxy-scyllo-inosose synthase (430 aa).

Residues Asp42, 73 to 76 (EVHK), 105 to 109 (GVTGN), 129 to 130 (TT), 140 to 142 (SLK), and 151 to 152 (KN) each bind NAD(+). Lys142 is a catalytic residue. Glu184 is a binding site for Co(2+). Glu244 is a catalytic residue. 2 residues coordinate Co(2+): His247 and His263. The tract at residues 371-430 (RGGAGGGAAEPAAARTGPVPDGPEAAVPATPGPVPAGPAAAAPLPSGPAPTAPAAAGPVP) is disordered. Residues 379 to 399 (AEPAAARTGPVPDGPEAAVPA) show a composition bias toward low complexity.

This sequence belongs to the sugar phosphate cyclases superfamily. DOI synthase family. NAD(+) is required as a cofactor. It depends on Co(2+) as a cofactor.

It catalyses the reaction D-glucose 6-phosphate = 2-deoxy-L-scyllo-inosose + phosphate. The protein operates within metabolic intermediate biosynthesis; 2-deoxystreptamine biosynthesis; 2-deoxystreptamine from D-glucose 6-phosphate: step 1/4. It participates in antibiotic biosynthesis; neomycin biosynthesis. In terms of biological role, catalyzes the intramolecular carbocycle formation from D-glucose-6-phosphate to 2-deoxy-scyllo-inosose (DOI). The chain is 2-deoxy-scyllo-inosose synthase (neoC) from Streptomyces fradiae (Streptomyces roseoflavus).